Reading from the N-terminus, the 140-residue chain is Putative pre-16S rRNA nuclease (140 aa).

This sequence belongs to the YqgF nuclease family.

The protein resides in the cytoplasm. Could be a nuclease involved in processing of the 5'-end of pre-16S rRNA. This is Putative pre-16S rRNA nuclease from Moorella thermoacetica (strain ATCC 39073 / JCM 9320).